Consider the following 464-residue polypeptide: Secretion-regulating guanine nucleotide exchange factor (464 aa).

RCC1 repeat units follow at residues 15-67 (AVLF…VTDG), 68-119 (GDLF…LTEK), 120-171 (GQVL…TTAT), 172-230 (GSVF…LTDT), 231-283 (GELY…KTET), 284-351 (GKVF…VIRD), and 352-402 (KCCS…LAVC). Residues 422–464 (DDTENTESQGAVDRDRLEGETISDLNPDRTRNGGGGCESETVQ) form a disordered region. Position 429 is a phosphoserine (Ser-429).

As to quaternary structure, interacts with SEC5. The interaction occurs only in the presence of magnesium or manganese and is stimulated by dCTP or GTP.

It is found in the cytoplasm. Its subcellular location is the nucleus. Probable guanine nucleotide exchange factor (GEF), which may be involved in the secretion process. The chain is Secretion-regulating guanine nucleotide exchange factor (Sergef) from Mus musculus (Mouse).